We begin with the raw amino-acid sequence, 465 residues long: MAP kinase-interacting serine/threonine-protein kinase 2 (465 aa).

The segment at 23–72 (ELAFSLDQPDHGDSDFGLQCSARPDMPASQPIDIPDAKKRGKKKKRGRAT) is disordered. The short motif at 60–66 (KKRGKKK) is the Nuclear localization signal element. S74 is subject to Phosphoserine. The Protein kinase domain occupies 84-388 (QLQEDVLGEG…TPMVLQRNSC (305 aa)). ATP is bound by residues 90 to 98 (LGEGAHARV) and K113. 160–162 (EKM) provides a ligand contact to staurosporine. D205 acts as the Proton acceptor in catalysis. Residue E209 coordinates staurosporine. Phosphothreonine occurs at positions 244 and 249. 3 residues coordinate Zn(2+): C299, C311, and C314. T379 is modified (phosphothreonine). S437 and S440 each carry phosphoserine. An MAP kinase binding motif is present at residues 444-448 (LAQRR). S452 carries the phosphoserine modification.

It belongs to the protein kinase superfamily. CAMK Ser/Thr protein kinase family. Monomer. Interacts with the C-terminal regions of EIF4G1 and EIF4G2; this interaction is promoted when MAPK pathways are repressed but repressed upon ERK proteins activation. Also binds to dephosphorylated MAPK3/ERK1 and MAPK1/ERK2. Isoform 1 interaction with phosphorylated MAPK3/ERK1 and MAPK1/ERK2 protects it from dephosphorylation and inactivation. Isoform 2 interacts with ESR2 and EIF4E in the nucleus. Requires Mg(2+) as cofactor. It depends on Zn(2+) as a cofactor. Post-translationally, dual phosphorylation of Thr-244 and Thr-249 activates the kinase. Phosphorylation of Thr-379 activates the kinase. Phosphorylated upon arsenic trioxide As(2)O(3) treatment. Phosphorylated by MAPK1/ERK2, MAPK11 and MAPK14. Dephosphorylated by PP2A. As to expression, ubiquitously expressed in all tissues examined. Isoform 2 is expressed at higher levels in the ovary than is isoform 1.

It is found in the nucleus. Its subcellular location is the PML body. The protein localises to the cytoplasm. The catalysed reaction is L-seryl-[protein] + ATP = O-phospho-L-seryl-[protein] + ADP + H(+). It carries out the reaction L-threonyl-[protein] + ATP = O-phospho-L-threonyl-[protein] + ADP + H(+). With respect to regulation, inhibited by CGP57380 and staurosporine. Activated by phosphorylation in a negative-feedback regulatory manner in response to chemotherapy (e.g. cytarabine) and thus impairs the generation of antileukemic responses. In terms of biological role, serine/threonine-protein kinase that phosphorylates SFPQ/PSF, HNRNPA1 and EIF4E. May play a role in the response to environmental stress and cytokines. Appears to regulate translation by phosphorylating EIF4E, thus increasing the affinity of this protein for the 7-methylguanosine-containing mRNA cap. Required for mediating PP2A-inhibition-induced EIF4E phosphorylation. Triggers EIF4E shuttling from cytoplasm to nucleus. Isoform 1 displays a high basal kinase activity, but isoform 2 exhibits a very low kinase activity. Acts as a mediator of the suppressive effects of IFNgamma on hematopoiesis. Negative regulator for signals that control generation of arsenic trioxide As(2)O(3)-dependent apoptosis and anti-leukemic responses. Involved in anti-apoptotic signaling in response to serum withdrawal. In Homo sapiens (Human), this protein is MAP kinase-interacting serine/threonine-protein kinase 2 (MKNK2).